Consider the following 341-residue polypeptide: Protein-glutamate methylesterase/protein-glutamine glutaminase 2 (341 aa).

Positions 7–120 (KTLIVDDSLL…NRDLDSFFSE (114 aa)) constitute a Response regulatory domain. At D58 the chain carries 4-aspartylphosphate. The 187-residue stretch at 155–341 (VIAIGASTGG…QALYKLINQL (187 aa)) folds into the CheB-type methylesterase domain. Catalysis depends on residues S161, H187, and D283.

It belongs to the CheB family. Post-translationally, phosphorylated by CheA. Phosphorylation of the N-terminal regulatory domain activates the methylesterase activity.

It is found in the cytoplasm. It catalyses the reaction [protein]-L-glutamate 5-O-methyl ester + H2O = L-glutamyl-[protein] + methanol + H(+). The catalysed reaction is L-glutaminyl-[protein] + H2O = L-glutamyl-[protein] + NH4(+). Its function is as follows. Involved in chemotaxis. Part of a chemotaxis signal transduction system that modulates chemotaxis in response to various stimuli. Catalyzes the demethylation of specific methylglutamate residues introduced into the chemoreceptors (methyl-accepting chemotaxis proteins or MCP) by CheR. Also mediates the irreversible deamidation of specific glutamine residues to glutamic acid. The chain is Protein-glutamate methylesterase/protein-glutamine glutaminase 2 from Syntrophomonas wolfei subsp. wolfei (strain DSM 2245B / Goettingen).